The primary structure comprises 452 residues: GATA-binding factor 2 (452 aa).

Residues 130–182 (GGSLYPGTGSSACPSSSHSSPHLFGFPPTPPKDVSPDPGPASPPSSSRLEDKD) are disordered. The span at 139–151 (SSACPSSSHSSPH) shows a compositional bias: low complexity. Residues 156–172 (PPTPPKDVSPDPGPASP) are compositionally biased toward pro residues. 2 GATA-type zinc fingers span residues 267-291 (CVNC…CNAC) and 321-345 (CANC…CNAC). The segment covering 426–438 (QTPTPIHPSSSLS) has biased composition (polar residues). The interval 426–452 (QTPTPIHPSSSLSFGHPHHSSMVTAMG) is disordered.

Expressed in the developing ventral blood island, and in the embryonic nervous system.

It is found in the nucleus. This Xenopus laevis (African clawed frog) protein is GATA-binding factor 2 (gata2).